A 391-amino-acid chain; its full sequence is Inactive polyketide synthase 2 (391 aa).

Cys-164 is a catalytic residue.

This sequence belongs to the thiolase-like superfamily. Chalcone/stilbene synthases family. As to quaternary structure, homodimer.

In Rubus idaeus (Raspberry), this protein is Inactive polyketide synthase 2 (PKS2).